We begin with the raw amino-acid sequence, 199 residues long: Thymidylate kinase (199 aa).

7–14 (GTEGVGKT) is an ATP binding site.

The protein belongs to the thymidylate kinase family.

The enzyme catalyses dTMP + ATP = dTDP + ADP. Phosphorylation of dTMP to form dTDP in both de novo and salvage pathways of dTTP synthesis. The protein is Thymidylate kinase of Acinetobacter baumannii (strain ATCC 17978 / DSM 105126 / CIP 53.77 / LMG 1025 / NCDC KC755 / 5377).